The sequence spans 287 residues: D-apionate oxidoisomerase (287 aa).

Residues 13-15 (GKM), E36, and D71 contribute to the NAD(+) site. The Zn(2+) site is built by H116 and E186.

This sequence belongs to the ApnO family. It depends on Zn(2+) as a cofactor.

The enzyme catalyses D-apionate + NAD(+) = 3-oxoisoapionate + NADH + H(+). It participates in carbohydrate metabolism. Functionally, involved in catabolism of D-apiose. Catalyzes the conversion of D-apionate to 3-oxo-isoapionate. The polypeptide is D-apionate oxidoisomerase (Blautia hydrogenotrophica (strain DSM 10507 / JCM 14656 / S5a33) (Ruminococcus hydrogenotrophicus)).